We begin with the raw amino-acid sequence, 325 residues long: NADH-quinone oxidoreductase subunit H (325 aa).

8 helical membrane-spanning segments follow: residues 8–28 (VIDI…VVTC), 81–101 (GIFT…FAIV), 114–134 (IGVL…LFAG), 159–179 (FLGL…LGAI), 186–206 (LWNV…GVAV), 237–257 (FFVG…TLFF), 265–285 (LPPF…FILI), and 304–324 (ICLP…LYNA).

This sequence belongs to the complex I subunit 1 family. NDH-1 is composed of 13 different subunits. Subunits NuoA, H, J, K, L, M, N constitute the membrane sector of the complex.

Its subcellular location is the cell inner membrane. The enzyme catalyses a quinone + NADH + 5 H(+)(in) = a quinol + NAD(+) + 4 H(+)(out). NDH-1 shuttles electrons from NADH, via FMN and iron-sulfur (Fe-S) centers, to quinones in the respiratory chain. The immediate electron acceptor for the enzyme in this species is believed to be ubiquinone. Couples the redox reaction to proton translocation (for every two electrons transferred, four hydrogen ions are translocated across the cytoplasmic membrane), and thus conserves the redox energy in a proton gradient. This subunit may bind ubiquinone. The chain is NADH-quinone oxidoreductase subunit H from Sodalis glossinidius (strain morsitans).